Consider the following 260-residue polypeptide: O-antigen export system permease protein RfbA (260 aa).

Helical transmembrane passes span Phe-31–Leu-51, Phe-63–Gly-83, Val-109–Met-129, Val-139–Ile-159, Ile-173–Thr-193, Ser-201–Tyr-221, and Glu-229–Phe-249. Residues Leu-32–Arg-252 form the ABC transmembrane type-2 domain.

Belongs to the ABC-2 integral membrane protein family.

It is found in the cell inner membrane. Its function is as follows. May form an ATP-driven O-antigen export apparatus, in association with RfbB. In Myxococcus xanthus, this protein is O-antigen export system permease protein RfbA (rfbA).